Reading from the N-terminus, the 269-residue chain is uncharacterized protein (269 aa).

Residues 14–89 enclose the ACT domain; that stretch reads FEYEIQVNRP…KLREPRLRDR (76 aa).

This is an uncharacterized protein from Bacillus subtilis (strain 168).